Reading from the N-terminus, the 341-residue chain is HTH-type transcriptional repressor CytR (341 aa).

The 55-residue stretch at 10–64 folds into the HTH lacI-type domain; it reads ATMKDVALKAKVSTATVSRALMNPDKVSQATRNRVEKAAREVGYLPQPMGRNVKR. Positions 12 to 31 form a DNA-binding region, H-T-H motif; that stretch reads MKDVALKAKVSTATVSRALM.

In terms of biological role, this protein negatively controls the transcription initiation of genes such as deoCABD, udp, and cdd encoding catabolizing enzymes and nupC, nupG, and tsx encoding transporting and pore-forming proteins. Binds cytidine and adenosine as effectors. The protein is HTH-type transcriptional repressor CytR (cytR) of Escherichia coli (strain K12).